The primary structure comprises 330 residues: Aspartate--ammonia ligase (330 aa).

It belongs to the class-II aminoacyl-tRNA synthetase family. AsnA subfamily.

Its subcellular location is the cytoplasm. The catalysed reaction is L-aspartate + NH4(+) + ATP = L-asparagine + AMP + diphosphate + H(+). Its pathway is amino-acid biosynthesis; L-asparagine biosynthesis; L-asparagine from L-aspartate (ammonia route): step 1/1. The protein is Aspartate--ammonia ligase of Escherichia coli O8 (strain IAI1).